The chain runs to 206 residues: tRNA(Phe) 7-((3-amino-3-carboxypropyl)-4-demethylwyosine(37)-N(4))-methyltransferase 2 (206 aa).

This sequence belongs to the TYW3 family.

It catalyses the reaction 4-demethyl-7-[(3S)-3-amino-3-carboxypropyl]wyosine(37) in tRNA(Phe) + S-adenosyl-L-methionine = 7-[(3S)-3-amino-3-carboxypropyl]wyosine(37) in tRNA(Phe) + S-adenosyl-L-homocysteine + H(+). S-adenosyl-L-methionine-dependent methyltransferase that acts as a component of the wyosine derivatives biosynthesis pathway. Probably methylates N-4 position of wybutosine-86 to produce wybutosine-72. The chain is tRNA(Phe) 7-((3-amino-3-carboxypropyl)-4-demethylwyosine(37)-N(4))-methyltransferase 2 from Pyrococcus furiosus (strain ATCC 43587 / DSM 3638 / JCM 8422 / Vc1).